The following is a 566-amino-acid chain: Proline--tRNA ligase (566 aa).

Belongs to the class-II aminoacyl-tRNA synthetase family. ProS type 1 subfamily. As to quaternary structure, homodimer.

It is found in the cytoplasm. The enzyme catalyses tRNA(Pro) + L-proline + ATP = L-prolyl-tRNA(Pro) + AMP + diphosphate. Its function is as follows. Catalyzes the attachment of proline to tRNA(Pro) in a two-step reaction: proline is first activated by ATP to form Pro-AMP and then transferred to the acceptor end of tRNA(Pro). As ProRS can inadvertently accommodate and process non-cognate amino acids such as alanine and cysteine, to avoid such errors it has two additional distinct editing activities against alanine. One activity is designated as 'pretransfer' editing and involves the tRNA(Pro)-independent hydrolysis of activated Ala-AMP. The other activity is designated 'posttransfer' editing and involves deacylation of mischarged Ala-tRNA(Pro). The misacylated Cys-tRNA(Pro) is not edited by ProRS. In Bacillus cereus (strain G9842), this protein is Proline--tRNA ligase.